We begin with the raw amino-acid sequence, 523 residues long: Glycerate kinase (523 aa).

Serine 60 is modified (phosphoserine). The residue at position 200 (lysine 200) is an N6-acetyllysine.

The protein belongs to the glycerate kinase type-2 family.

It is found in the cytoplasm. It carries out the reaction (R)-glycerate + ATP = (2R)-3-phosphoglycerate + ADP + H(+). The polypeptide is Glycerate kinase (Glyctk) (Rattus norvegicus (Rat)).